The sequence spans 217 residues: Probable transaldolase (217 aa).

Catalysis depends on Lys-83, which acts as the Schiff-base intermediate with substrate.

This sequence belongs to the transaldolase family. Type 3B subfamily.

The protein localises to the cytoplasm. The enzyme catalyses D-sedoheptulose 7-phosphate + D-glyceraldehyde 3-phosphate = D-erythrose 4-phosphate + beta-D-fructose 6-phosphate. It participates in carbohydrate degradation; pentose phosphate pathway; D-glyceraldehyde 3-phosphate and beta-D-fructose 6-phosphate from D-ribose 5-phosphate and D-xylulose 5-phosphate (non-oxidative stage): step 2/3. Its function is as follows. Transaldolase is important for the balance of metabolites in the pentose-phosphate pathway. This chain is Probable transaldolase, found in Clostridium botulinum (strain Okra / Type B1).